The chain runs to 68 residues: Protein SlyX homolog (68 aa).

It belongs to the SlyX family.

The polypeptide is Protein SlyX homolog (Pseudomonas syringae pv. syringae (strain B728a)).